Reading from the N-terminus, the 338-residue chain is UDP-N-acetylenolpyruvoylglucosamine reductase (338 aa).

The FAD-binding PCMH-type domain maps to 17-188 (IAARTDWWID…MYVDYRLRLR (172 aa)). Residue arginine 164 is part of the active site. Serine 237 acts as the Proton donor in catalysis. The active site involves glutamate 333.

The protein belongs to the MurB family. FAD is required as a cofactor.

It is found in the cytoplasm. It carries out the reaction UDP-N-acetyl-alpha-D-muramate + NADP(+) = UDP-N-acetyl-3-O-(1-carboxyvinyl)-alpha-D-glucosamine + NADPH + H(+). Its pathway is cell wall biogenesis; peptidoglycan biosynthesis. Functionally, cell wall formation. The chain is UDP-N-acetylenolpyruvoylglucosamine reductase from Porphyromonas gingivalis (strain ATCC 33277 / DSM 20709 / CIP 103683 / JCM 12257 / NCTC 11834 / 2561).